The sequence spans 462 residues: L-seryl-tRNA(Sec) selenium transferase (462 aa).

Position 293 is an N6-(pyridoxal phosphate)lysine (Lys-293).

This sequence belongs to the SelA family. Pyridoxal 5'-phosphate is required as a cofactor.

The protein resides in the cytoplasm. It catalyses the reaction L-seryl-tRNA(Sec) + selenophosphate + H(+) = L-selenocysteinyl-tRNA(Sec) + phosphate. The protein operates within aminoacyl-tRNA biosynthesis; selenocysteinyl-tRNA(Sec) biosynthesis; selenocysteinyl-tRNA(Sec) from L-seryl-tRNA(Sec) (bacterial route): step 1/1. Functionally, converts seryl-tRNA(Sec) to selenocysteinyl-tRNA(Sec) required for selenoprotein biosynthesis. In Clostridium botulinum (strain Loch Maree / Type A3), this protein is L-seryl-tRNA(Sec) selenium transferase.